The sequence spans 321 residues: Phospho-N-acetylmuramoyl-pentapeptide-transferase (321 aa).

The next 10 membrane-spanning stretches (helical) occupy residues 6–26 (MLIPMVSAFAITIMFMPLFIG), 53–73 (TMGGLIFIAAIIVSAIWVGIW), 77–97 (LTLSVWVSLFILVLYGLLGFY), 121–141 (ILGAIIFLIAYFHEGFDHTLW), 144–164 (IIGNVSAAWFYVLFVIVWLVG), 175–195 (LDGLVAGQTTISFGTYAIIAA), 200–220 (TDVLIVCLVTIGAMLGFLMFN), 226–246 (IFMGDLGSLALGGMLAVVAIL), 251–271 (WSLLLIGIIYVTETASVILQV), and 301–321 (IDLTFWLVGLIGSGIYLAFFL).

It belongs to the glycosyltransferase 4 family. MraY subfamily. Mg(2+) is required as a cofactor.

The protein localises to the cell membrane. The catalysed reaction is UDP-N-acetyl-alpha-D-muramoyl-L-alanyl-gamma-D-glutamyl-L-lysyl-D-alanyl-D-alanine + di-trans,octa-cis-undecaprenyl phosphate = Mur2Ac(oyl-L-Ala-gamma-D-Glu-L-Lys-D-Ala-D-Ala)-di-trans,octa-cis-undecaprenyl diphosphate + UMP. It functions in the pathway cell wall biogenesis; peptidoglycan biosynthesis. Functionally, catalyzes the initial step of the lipid cycle reactions in the biosynthesis of the cell wall peptidoglycan: transfers peptidoglycan precursor phospho-MurNAc-pentapeptide from UDP-MurNAc-pentapeptide onto the lipid carrier undecaprenyl phosphate, yielding undecaprenyl-pyrophosphoryl-MurNAc-pentapeptide, known as lipid I. The protein is Phospho-N-acetylmuramoyl-pentapeptide-transferase of Lacticaseibacillus paracasei (strain ATCC 334 / BCRC 17002 / CCUG 31169 / CIP 107868 / KCTC 3260 / NRRL B-441) (Lactobacillus paracasei).